Here is a 162-residue protein sequence, read N- to C-terminus: Regulator of sigma D (162 aa).

This sequence belongs to the Rsd/AlgQ family. As to quaternary structure, interacts with RpoD.

It is found in the cytoplasm. Functionally, binds RpoD and negatively regulates RpoD-mediated transcription activation by preventing the interaction between the primary sigma factor RpoD with the catalytic core of the RNA polymerase and with promoter DNA. May be involved in replacement of the RNA polymerase sigma subunit from RpoD to RpoS during the transition from exponential growth to the stationary phase. This chain is Regulator of sigma D, found in Salmonella typhi.